We begin with the raw amino-acid sequence, 516 residues long: MGHEEELSPEQVDLKVSPLMGSLKRTWNDFCATSSIHGLRYTRDEDTNRIVHFVWLLISLVMFICAVVMARTFYIDFRSNPTRMNVESDNTPVNTLYFPPVTICPDVLFNMQKSEAFLQTLQLPQGTNQSVILRKLHIFYGFMLDDEKYSEQDTSLMESLLSLNNLTLQQLVEHLRWNCDEILYRCRFNGQIRDCLELFQLSKTFFGHCCSFNLRQTGLNFTAERAVGGLKYGLSVILRYKDDSYDPVQSYSFGVKLLIQESDAFPSAHSSSKFIAFNSEVFAAIRPQETFCSPAVKALSIEDRNCVFRNEFKMRYFKNYVYPNCELNCRVTNMVKFCNCHTYFFDFNRTTDRICTFKDIPCLVDNFANIISRKRSTQCYCPLTCEHLDYDVQISDFPLKLNMPVGDQFYSGINKNDGILHVFINSFGYRRLRHDLLSNMVTLVSNLGSAFSLFVGMSMLSVVEIMYYFSVILRKNYVLECEARKKMLHKGPKFAWPKANDSHSKHQKSVFIIHKM.

The Cytoplasmic portion of the chain corresponds to 1-49; that stretch reads MGHEEELSPEQVDLKVSPLMGSLKRTWNDFCATSSIHGLRYTRDEDTNR. A helical membrane pass occupies residues 50–70; sequence IVHFVWLLISLVMFICAVVMA. Over 71-452 the chain is Extracellular; that stretch reads RTFYIDFRSN…LVSNLGSAFS (382 aa). Asn-128, Asn-165, Asn-220, and Asn-348 each carry an N-linked (GlcNAc...) asparagine glycan. The chain crosses the membrane as a helical span at residues 453-473; that stretch reads LFVGMSMLSVVEIMYYFSVIL. Over 474–516 the chain is Cytoplasmic; it reads RKNYVLECEARKKMLHKGPKFAWPKANDSHSKHQKSVFIIHKM.

Belongs to the amiloride-sensitive sodium channel (TC 1.A.6) family.

It is found in the membrane. In terms of biological role, part of a complex that plays a role in tracheal liquid clearance. Probable role in sodium transport. This chain is Sodium channel protein Nach (Nach), found in Drosophila ananassae (Fruit fly).